A 252-amino-acid polypeptide reads, in one-letter code: 3-deoxy-manno-octulosonate cytidylyltransferase 2 (252 aa).

It belongs to the KdsB family.

The protein localises to the cytoplasm. The catalysed reaction is 3-deoxy-alpha-D-manno-oct-2-ulosonate + CTP = CMP-3-deoxy-beta-D-manno-octulosonate + diphosphate. Its pathway is nucleotide-sugar biosynthesis; CMP-3-deoxy-D-manno-octulosonate biosynthesis; CMP-3-deoxy-D-manno-octulosonate from 3-deoxy-D-manno-octulosonate and CTP: step 1/1. The protein operates within bacterial outer membrane biogenesis; lipopolysaccharide biosynthesis. Its function is as follows. Activates KDO (a required 8-carbon sugar) for incorporation into bacterial lipopolysaccharide in Gram-negative bacteria. The polypeptide is 3-deoxy-manno-octulosonate cytidylyltransferase 2 (Actinobacillus pleuropneumoniae serotype 5b (strain L20)).